A 138-amino-acid chain; its full sequence is Large ribosomal subunit protein uL16 (138 aa).

Over residues 1-19 (MLSPKRTKYRKAHKGRIHG) the composition is skewed to basic residues. The interval 1–21 (MLSPKRTKYRKAHKGRIHGNA) is disordered.

Belongs to the universal ribosomal protein uL16 family. In terms of assembly, part of the 50S ribosomal subunit.

Its function is as follows. Binds 23S rRNA and is also seen to make contacts with the A and possibly P site tRNAs. The polypeptide is Large ribosomal subunit protein uL16 (Granulibacter bethesdensis (strain ATCC BAA-1260 / CGDNIH1)).